The chain runs to 417 residues: Gamma-glutamyl phosphate reductase (417 aa).

It belongs to the gamma-glutamyl phosphate reductase family.

It localises to the cytoplasm. It catalyses the reaction L-glutamate 5-semialdehyde + phosphate + NADP(+) = L-glutamyl 5-phosphate + NADPH + H(+). The protein operates within amino-acid biosynthesis; L-proline biosynthesis; L-glutamate 5-semialdehyde from L-glutamate: step 2/2. Its function is as follows. Catalyzes the NADPH-dependent reduction of L-glutamate 5-phosphate into L-glutamate 5-semialdehyde and phosphate. The product spontaneously undergoes cyclization to form 1-pyrroline-5-carboxylate. This is Gamma-glutamyl phosphate reductase from Legionella pneumophila subsp. pneumophila (strain Philadelphia 1 / ATCC 33152 / DSM 7513).